The following is a 342-amino-acid chain: MKKKLILAAAGAMAVFSLAACSSGSKDIATMKGSTITVDDFYNQIKEQSTSQQAFSQMVIYKVFEEKYGDKVTDKDIQKNFDEAKEQVEAQGGKFSDALKQAGLTEKTFKKQLKQRAAYDAGLKAHLKITDEDLKTAWASFHPEVEAQIIQVASEDDAKAVKKEITDGGDFTKIAKEKSTDTATKKDGGKIKFDSQATTVPAEVKEAAFKLKDGEVSEPIAATNMQTYQTTYYVVKMTKNKAKGNDMKPYEKEIKKIAEETKLADQTFVSKVISDELKAANVKIKDDAFKNALAGYMQTESSSASSEKKESKSSDSKTSDTKTSDSEKATDSSSKTTESSSK.

Positions 1-20 (MKKKLILAAAGAMAVFSLAA) are cleaved as a signal peptide. C21 carries N-palmitoyl cysteine lipidation. C21 carries the S-diacylglycerol cysteine lipid modification. The PpiC domain maps to 142 to 235 (HPEVEAQIIQ…QTYQTTYYVV (94 aa)). The interval 297–342 (MQTESSSASSEKKESKSSDSKTSDTKTSDSEKATDSSSKTTESSSK) is disordered. Residues 306 to 330 (SEKKESKSSDSKTSDTKTSDSEKAT) are compositionally biased toward basic and acidic residues. Low complexity predominate over residues 331–342 (DSSSKTTESSSK).

The protein belongs to the PrsA family.

It localises to the cell membrane. The catalysed reaction is [protein]-peptidylproline (omega=180) = [protein]-peptidylproline (omega=0). Its function is as follows. Plays a major role in protein secretion by helping the post-translocational extracellular folding of several secreted proteins. This chain is Foldase protein PrsA, found in Enterococcus faecalis (strain ATCC 700802 / V583).